The sequence spans 421 residues: Imidazolonepropionase (421 aa).

H81 and H83 together coordinate Fe(3+). Residues H81 and H83 each contribute to the Zn(2+) site. 3 residues coordinate 4-imidazolone-5-propanoate: R90, Y153, and H186. Y153 contributes to the N-formimidoyl-L-glutamate binding site. Residue H251 coordinates Fe(3+). Zn(2+) is bound at residue H251. E254 is a binding site for 4-imidazolone-5-propanoate. D326 lines the Fe(3+) pocket. D326 serves as a coordination point for Zn(2+). N-formimidoyl-L-glutamate contacts are provided by N328 and G330. Residue S331 coordinates 4-imidazolone-5-propanoate.

The protein belongs to the metallo-dependent hydrolases superfamily. HutI family. It depends on Zn(2+) as a cofactor. Requires Fe(3+) as cofactor.

The protein resides in the cytoplasm. It catalyses the reaction 4-imidazolone-5-propanoate + H2O = N-formimidoyl-L-glutamate. The protein operates within amino-acid degradation; L-histidine degradation into L-glutamate; N-formimidoyl-L-glutamate from L-histidine: step 3/3. In terms of biological role, catalyzes the hydrolytic cleavage of the carbon-nitrogen bond in imidazolone-5-propanoate to yield N-formimidoyl-L-glutamate. It is the third step in the universal histidine degradation pathway. This Streptococcus pyogenes serotype M4 (strain MGAS10750) protein is Imidazolonepropionase.